Consider the following 499-residue polypeptide: Probable folate-biopterin transporter 2 (499 aa).

12 consecutive transmembrane segments (helical) span residues 43–63, 92–112, 116–136, 141–161, 185–205, 209–229, 266–286, 302–322, 330–350, 354–374, 399–419, and 435–455; these read WSFV…GGSL, IPWI…IFGF, PYFI…SLHS, YLAL…DVTI, LSSS…VHLV, GVFG…IVFS, LYMY…FYWF, FILS…QLVL, LCLW…ILVF, LKFG…SQMI, FALL…LGGI, and WLAV…LFLV.

The protein belongs to the major facilitator superfamily. Folate-biopterin transporter (TC 2.A.71) family.

The protein resides in the membrane. Its function is as follows. Could mediate folate transport. In Arabidopsis thaliana (Mouse-ear cress), this protein is Probable folate-biopterin transporter 2.